The sequence spans 159 residues: Crossover junction endodeoxyribonuclease RuvC (159 aa).

Active-site residues include Asp7, Glu66, and Asp139. Mg(2+) contacts are provided by Asp7, Glu66, and Asp139.

It belongs to the RuvC family. As to quaternary structure, homodimer which binds Holliday junction (HJ) DNA. The HJ becomes 2-fold symmetrical on binding to RuvC with unstacked arms; it has a different conformation from HJ DNA in complex with RuvA. In the full resolvosome a probable DNA-RuvA(4)-RuvB(12)-RuvC(2) complex forms which resolves the HJ. Mg(2+) is required as a cofactor.

It is found in the cytoplasm. The catalysed reaction is Endonucleolytic cleavage at a junction such as a reciprocal single-stranded crossover between two homologous DNA duplexes (Holliday junction).. Its function is as follows. The RuvA-RuvB-RuvC complex processes Holliday junction (HJ) DNA during genetic recombination and DNA repair. Endonuclease that resolves HJ intermediates. Cleaves cruciform DNA by making single-stranded nicks across the HJ at symmetrical positions within the homologous arms, yielding a 5'-phosphate and a 3'-hydroxyl group; requires a central core of homology in the junction. The consensus cleavage sequence is 5'-(A/T)TT(C/G)-3'. Cleavage occurs on the 3'-side of the TT dinucleotide at the point of strand exchange. HJ branch migration catalyzed by RuvA-RuvB allows RuvC to scan DNA until it finds its consensus sequence, where it cleaves and resolves the cruciform DNA. The polypeptide is Crossover junction endodeoxyribonuclease RuvC (Sulfurovum sp. (strain NBC37-1)).